We begin with the raw amino-acid sequence, 70 residues long: Probable protein transport protein Sec61 subunit gamma (70 aa).

The Cytoplasmic segment spans residues 1–39 (MADQIQEILDVPREFLKDGIQFIKKCQKPDRREFIKISQ). Residues 40 to 58 (AVGTGFLIMGAVGYLVKLI) form a helical membrane-spanning segment. At 59–70 (HIPLNQVLVGGA) the chain is on the extracellular side.

This sequence belongs to the SecE/SEC61-gamma family. As to quaternary structure, heterotrimeric complex composed of SEC61-alpha, SEC61-beta and SEC61-gamma.

The protein localises to the endoplasmic reticulum membrane. Necessary for protein translocation in the endoplasmic reticulum. The protein is Probable protein transport protein Sec61 subunit gamma of Neurospora crassa (strain ATCC 24698 / 74-OR23-1A / CBS 708.71 / DSM 1257 / FGSC 987).